A 917-amino-acid chain; its full sequence is Smoothelin (917 aa).

Position 2 is an N-acetylalanine (Ala2). The stretch at 24–89 (LAERRRIRSA…ARLAGQLESM (66 aa)) forms a coiled coil. The tract at residues 157–456 (EVPEREEQEQ…AVGTAEPGGS (300 aa)) is disordered. Over residues 177-188 (PEGTSQDVTTVT) the composition is skewed to polar residues. 2 stretches are compositionally biased toward low complexity: residues 193-210 (APPG…SSPT) and 220-232 (PAEA…EVPG). Positions 233–243 (SPEPPPSPPKT) are enriched in pro residues. The span at 244–258 (TSPEPQESPTLPSTE) shows a compositional bias: low complexity. The segment covering 298–326 (RSLSVLSPRQPAQNRESTPLASGPSSFQR) has biased composition (polar residues). 3 positions are modified to phosphoserine: Ser299, Ser301, and Ser304. Basic and acidic residues predominate over residues 329–338 (SVRDRVHKFT). At Ser341 the chain carries Phosphoserine. The residue at position 351 (Thr351) is a Phosphothreonine. Ser357 carries the post-translational modification Phosphoserine. Thr360 and Thr373 each carry phosphothreonine. A compositionally biased stretch (low complexity) spans 363 to 392 (RLLGPSLTSTTPASSSSGSSSRGPSDTSSR). 4 positions are modified to phosphoserine: Ser503, Ser514, Ser523, and Ser576. 2 disordered regions span residues 560-580 (ANGA…PLSA) and 617-767 (QRKR…RKAM). A coiled-coil region spans residues 603–630 (EERKLIRAALRELRQRKRDQRDKERERR). The span at 617 to 640 (QRKRDQRDKERERRLQEARGRPGE) shows a compositional bias: basic and acidic residues. Over residues 676-689 (NDGTRTARTTTVES) the composition is skewed to polar residues. A compositionally biased stretch (low complexity) spans 701–720 (STMMQTKTFSSSSSSKKMGS). Ser729 bears the Phosphoserine mark. The segment covering 738-750 (LEKRQAEKKKELM) has biased composition (basic and acidic residues). Position 792 is a phosphoserine (Ser792). Residues 799–906 (NSIKQMLLDW…YVQSLYNHLR (108 aa)) enclose the Calponin-homology (CH) domain.

The protein belongs to the smoothelin family. In terms of tissue distribution, smooth muscle; contractile or vascular (for the long form).

It is found in the cytoplasm. It localises to the cytoskeleton. Structural protein of the cytoskeleton. The polypeptide is Smoothelin (SMTN) (Homo sapiens (Human)).